Reading from the N-terminus, the 71-residue chain is Small ribosomal subunit protein bS21 (71 aa).

This sequence belongs to the bacterial ribosomal protein bS21 family.

The polypeptide is Small ribosomal subunit protein bS21 (Pseudoalteromonas atlantica (strain T6c / ATCC BAA-1087)).